The sequence spans 359 residues: MVRPMLLLSLGLLAGLLPALAACPQNCHCHSDLQHVICDKVGLQKIPKVSEKTKLLNLQRNNFPVLAANSFRAMPNLVSLHLQHCQIREVAAGAFRGLKQLIYLYLSHNDIRVLRAGAFDDLTELTYLYLDHNKVTELPRGLLSPLVNLFILQLNNNKIRELRAGAFQGAKDLRWLYLSENALSSLQPGALDDVENLAKFHVDRNQLSSYPSAALSKLRVVEELKLSHNPLKSIPDNAFQSFGRYLETLWLDNTNLEKFSDGAFLGVTTLKHVHLENNRLNQLPSNFPFDSLETLALTNNPWKCTCQLRGLRRWLEAKASRPDATCASPAKFKGQHIRDTDAFRSCKFPTKRSKKAGRH.

The signal sequence occupies residues 1-22 (MVRPMLLLSLGLLAGLLPALAA). An intrachain disulfide couples cysteine 23 to cysteine 38. Residues 23-52 (CPQNCHCHSDLQHVICDKVGLQKIPKVSEK) enclose the LRRNT domain. LRR repeat units follow at residues 76 to 97 (NLVSLHLQHCQIREVAAGAFRG), 100 to 121 (QLIYLYLSHNDIRVLRAGAFDD), 124 to 145 (ELTYLYLDHNKVTELPRGLLSP), 148 to 169 (NLFILQLNNNKIRELRAGAFQG), 172 to 193 (DLRWLYLSENALSSLQPGALDD), 196 to 217 (NLAKFHVDRNQLSSYPSAALSK), 220 to 241 (VVEELKLSHNPLKSIPDNAFQS), 245 to 266 (YLETLWLDNTNLEKFSDGAFLG), and 269 to 290 (TLKHVHLENNRLNQLPSNFPFD). O-linked (GalNAc...) serine glycosylation occurs at serine 144. In terms of domain architecture, LRRCT spans 300–348 (NPWKCTCQLRGLRRWLEAKASRPDATCASPAKFKGQHIRDTDAFRSCKF). Intrachain disulfides connect cysteine 304-cysteine 346 and cysteine 306-cysteine 326.

Belongs to the small leucine-rich proteoglycan (SLRP) family. SLRP class IV subfamily. As to quaternary structure, mostly monomeric. Interacts with collagen type II. In terms of tissue distribution, present in chondrocytes at all ages.

Its subcellular location is the secreted. The protein resides in the extracellular space. The protein localises to the extracellular matrix. Its function is as follows. Promotes attachment of chondrocytes, fibroblasts, and osteoblasts. This binding is mediated (at least for chondrocytes and fibroblasts) by the integrin alpha(2)beta(1). May play an important role in the regulation of chondrocyte growth and proliferation. The sequence is that of Chondroadherin (CHAD) from Homo sapiens (Human).